The sequence spans 202 residues: 3-isopropylmalate dehydratase small subunit (202 aa).

It belongs to the LeuD family. LeuD type 1 subfamily. In terms of assembly, heterodimer of LeuC and LeuD.

It catalyses the reaction (2R,3S)-3-isopropylmalate = (2S)-2-isopropylmalate. It participates in amino-acid biosynthesis; L-leucine biosynthesis; L-leucine from 3-methyl-2-oxobutanoate: step 2/4. In terms of biological role, catalyzes the isomerization between 2-isopropylmalate and 3-isopropylmalate, via the formation of 2-isopropylmaleate. The protein is 3-isopropylmalate dehydratase small subunit of Rhizobium etli (strain CIAT 652).